Consider the following 141-residue polypeptide: MRFKKYFKIKYKNNNVYEHDLIHFGDFGLKSLGNCNLTSEQLTASLKAIKRVIKKKNFLIIKALPFWMLTRKPRDVRMGRGKGSPAVKVYPLKAGKIIFEFKNVNETLLLRALKSSSLRLPVPTKVVKKYDKRTDCIKSSW.

This sequence belongs to the universal ribosomal protein uL16 family.

It localises to the mitochondrion. The sequence is that of Large ribosomal subunit protein uL16m (RPL16) from Acanthamoeba castellanii (Amoeba).